A 396-amino-acid chain; its full sequence is Elongation factor Tu (396 aa).

Positions 10–206 (KPHCNIGTIG…AVDAYIPQPE (197 aa)) constitute a tr-type G domain. The G1 stretch occupies residues 19–26 (GHVDHGKT). GTP is bound at residue 19 to 26 (GHVDHGKT). Threonine 26 contacts Mg(2+). Residues 60 to 64 (GITIS) form a G2 region. The tract at residues 81–84 (DCPG) is G3. GTP contacts are provided by residues 81 to 85 (DCPGH) and 136 to 139 (NKCD). The G4 stretch occupies residues 136–139 (NKCD). A G5 region spans residues 174 to 176 (SAL).

Belongs to the TRAFAC class translation factor GTPase superfamily. Classic translation factor GTPase family. EF-Tu/EF-1A subfamily. In terms of assembly, monomer.

Its subcellular location is the cytoplasm. The enzyme catalyses GTP + H2O = GDP + phosphate + H(+). In terms of biological role, GTP hydrolase that promotes the GTP-dependent binding of aminoacyl-tRNA to the A-site of ribosomes during protein biosynthesis. The protein is Elongation factor Tu of Nitrobacter winogradskyi (strain ATCC 25391 / DSM 10237 / CIP 104748 / NCIMB 11846 / Nb-255).